The primary structure comprises 184 residues: ADP-ribosylation factor-like protein 8c (184 aa).

Residues 1–18 (MGLWDSLLNWLRSLFFKQ) constitute an intramembrane region (note=Mediates targeting to membranes). GTP is bound by residues 29-34 (NAGKTS), 48-51 (MIPT), 70-74 (DLGGQ), and 129-132 (NKID).

It belongs to the small GTPase superfamily. Arf family. As to quaternary structure, interacts with tubulin.

The protein resides in the late endosome membrane. It localises to the lysosome membrane. It is found in the cytoplasm. Its subcellular location is the cytoskeleton. The protein localises to the spindle. Its function is as follows. May play a role in lysosome motility. May play a role in chromosome segregation. In terms of biological role, (Microbial infection) Component of tomato mosaic virus (ToMV) RNA replication complexes. Required for tobamovirus multiplication, especially for efficient negative-strand RNA synthesis and viral RNA capping. This chain is ADP-ribosylation factor-like protein 8c, found in Arabidopsis thaliana (Mouse-ear cress).